The chain runs to 802 residues: Ribosome-releasing factor 2, mitochondrial (802 aa).

Positions 13–297 (KKIRNIGIIA…AVVDFLPSPA (285 aa)) constitute a tr-type G domain. Residues 22 to 29 (AHIDAGKT), 86 to 90 (DTPGH), and 140 to 143 (NKMD) each bind GTP.

It belongs to the TRAFAC class translation factor GTPase superfamily. Classic translation factor GTPase family. EF-G/EF-2 subfamily.

Its subcellular location is the mitochondrion. In terms of biological role, mitochondrial GTPase that mediates the disassembly of ribosomes from messenger RNA at the termination of mitochondrial protein biosynthesis. Not involved in the GTP-dependent ribosomal translocation step during translation elongation. The chain is Ribosome-releasing factor 2, mitochondrial from Yarrowia lipolytica (strain CLIB 122 / E 150) (Yeast).